A 353-amino-acid polypeptide reads, in one-letter code: Photosystem II protein D1 (353 aa).

Thr2 is subject to N-acetylthreonine. Thr2 is modified (phosphothreonine). 3 helical membrane-spanning segments follow: residues Tyr29–Ser46, His118–Leu133, and Trp142–Ala156. His118 serves as a coordination point for chlorophyll a. Tyr126 is a binding site for pheophytin a. [CaMn4O5] cluster-binding residues include Asp170 and Glu189. A helical membrane pass occupies residues Phe197–Leu218. Chlorophyll a is bound at residue His198. A quinone contacts are provided by residues His215 and Ser264–Phe265. Residue His215 participates in Fe cation binding. His272 provides a ligand contact to Fe cation. A helical membrane pass occupies residues Phe274–Leu288. [CaMn4O5] cluster-binding residues include His332, Glu333, Asp342, and Ala344. The propeptide occupies Ser345–Gly353.

This sequence belongs to the reaction center PufL/M/PsbA/D family. In terms of assembly, PSII is composed of 1 copy each of membrane proteins PsbA, PsbB, PsbC, PsbD, PsbE, PsbF, PsbH, PsbI, PsbJ, PsbK, PsbL, PsbM, PsbT, PsbX, PsbY, PsbZ, Psb30/Ycf12, at least 3 peripheral proteins of the oxygen-evolving complex and a large number of cofactors. It forms dimeric complexes. The cofactor is The D1/D2 heterodimer binds P680, chlorophylls that are the primary electron donor of PSII, and subsequent electron acceptors. It shares a non-heme iron and each subunit binds pheophytin, quinone, additional chlorophylls, carotenoids and lipids. D1 provides most of the ligands for the Mn4-Ca-O5 cluster of the oxygen-evolving complex (OEC). There is also a Cl(-1) ion associated with D1 and D2, which is required for oxygen evolution. The PSII complex binds additional chlorophylls, carotenoids and specific lipids.. In terms of processing, tyr-161 forms a radical intermediate that is referred to as redox-active TyrZ, YZ or Y-Z. C-terminally processed by CTPA; processing is essential to allow assembly of the oxygen-evolving complex and thus photosynthetic growth.

It is found in the plastid. The protein localises to the chloroplast thylakoid membrane. It carries out the reaction 2 a plastoquinone + 4 hnu + 2 H2O = 2 a plastoquinol + O2. Photosystem II (PSII) is a light-driven water:plastoquinone oxidoreductase that uses light energy to abstract electrons from H(2)O, generating O(2) and a proton gradient subsequently used for ATP formation. It consists of a core antenna complex that captures photons, and an electron transfer chain that converts photonic excitation into a charge separation. The D1/D2 (PsbA/PsbD) reaction center heterodimer binds P680, the primary electron donor of PSII as well as several subsequent electron acceptors. The polypeptide is Photosystem II protein D1 (Nephroselmis olivacea (Green alga)).